The primary structure comprises 398 residues: Phosphoglycerate kinase (398 aa).

Substrate-binding positions include 21–23, Arg37, 60–63, Arg117, and Arg157; these read DIN and HQGR. ATP-binding positions include Glu332 and 357 to 360; that span reads GGDT.

Belongs to the phosphoglycerate kinase family. Monomer.

The protein resides in the cytoplasm. The enzyme catalyses (2R)-3-phosphoglycerate + ATP = (2R)-3-phospho-glyceroyl phosphate + ADP. Its pathway is carbohydrate degradation; glycolysis; pyruvate from D-glyceraldehyde 3-phosphate: step 2/5. The polypeptide is Phosphoglycerate kinase (Halobacterium salinarum (strain ATCC 29341 / DSM 671 / R1)).